A 66-amino-acid polypeptide reads, in one-letter code: Large ribosomal subunit protein bL35 (66 aa).

The protein belongs to the bacterial ribosomal protein bL35 family.

This is Large ribosomal subunit protein bL35 from Synechococcus sp. (strain RCC307).